We begin with the raw amino-acid sequence, 182 residues long: Ferredoxin-thioredoxin reductase subunit A1, chloroplastic (182 aa).

A chloroplast-targeting transit peptide spans 1–81 (MSSQIALSPA…VAIKSADSIN (81 aa)).

It belongs to the ferredoxin thioredoxin reductase alpha subunit family. As to quaternary structure, heterodimer of subunit A (variable subunit) and subunit B (catalytic subunit). Heterodimeric FTR forms a complex with ferredoxin and thioredoxin.

The protein localises to the plastid. It localises to the chloroplast. Functionally, variable subunit of the ferredoxin-thioredoxin reductase (FTR), which catalyzes the two-electron reduction of thioredoxins by the electrons provided by reduced ferredoxin. The chain is Ferredoxin-thioredoxin reductase subunit A1, chloroplastic from Arabidopsis thaliana (Mouse-ear cress).